Consider the following 508-residue polypeptide: Erythropoietin receptor (508 aa).

The N-terminal stretch at 1-24 (MDHLGASLWPQVGSLCLLLAGAAW) is a signal peptide. Topologically, residues 25-250 (APPPNLPDPK…SLLTPSDLDP (226 aa)) are extracellular. Cys-52 and Cys-62 are joined by a disulfide. Asn-76 is a glycosylation site (N-linked (GlcNAc...) asparagine). A disulfide bridge connects residues Cys-91 and Cys-107. A Fibronectin type-III domain is found at 147–247 (APVGLVARLA…EPVSLLTPSD (101 aa)). Residues 233 to 237 (WSAWS) carry the WSXWS motif motif. Residues 251–273 (LILTLSLILVVILVLLTVLALLS) traverse the membrane as a helical segment. Over 274–508 (HRRALKQKIW…PLPPSYVACS (235 aa)) the chain is Cytoplasmic. A Glycyl lysine isopeptide (Lys-Gly) (interchain with G-Cter in ubiquitin) cross-link involves residue Lys-281. The Box 1 motif motif lies at 282-290 (IWPGIPSPE). A phosphotyrosine; by JAK2 mark is found at Tyr-368 and Tyr-426. Residues 452–457 (LKYLYL) carry the ITIM motif motif. A Glycyl lysine isopeptide (Lys-Gly) (interchain with G-Cter in ubiquitin) cross-link involves residue Lys-453. Residues Tyr-454, Tyr-456, Tyr-468, Tyr-485, Tyr-489, and Tyr-504 each carry the phosphotyrosine; by JAK2 modification. Positions 454 to 456 (YLY) are required for high-affinity SOCS3 binding. Positions 467 to 494 (DYSSGDSQGAQGGLSDGPYSNPYENSLI) are disordered.

Belongs to the type I cytokine receptor family. Type 1 subfamily. In terms of assembly, forms homodimers on EPO stimulation. The tyrosine-phosphorylated form interacts with several SH2 domain-containing proteins including LYN, the adapter protein SH2B2, PTPN6, PTPN11, JAK2, PI3 kinases, STAT5A/B, SOCS3, CRKL. Interacts with INPP5D/SHIP1. SH2B2 binding inhibits the JAK-STAT signaling. Interacts with RHEX; this interaction occurs in a erythropoietin (EPO)-dependent manner. Interacts with ATXN2L. Post-translationally, on EPO stimulation, phosphorylated on C-terminal tyrosine residues by JAK2. The phosphotyrosine motifs are also recruitment sites for several SH2-containing proteins and adapter proteins which mediate cell proliferation. Phosphorylation on Tyr-454 is required for PTPN6 interaction, Tyr-426 for PTPN11. Tyr-426 is also required for SOCS3 binding, but Tyr-454/Tyr-456 motif is the preferred binding site. In terms of processing, ubiquitinated by the ECS(SOCS2) complex following ligand-binding and phosphorylation by JAK2, leading to its degradation by the proteasome. Regulation by the ECS(SOCS2) complex acts as a negative feedback loop of erythropoietin-mediated signaling pathway. Ubiquitination at Lys-281 mediates receptor internalization, whereas ubiquitination at Lys-453 promotes trafficking of activated receptors to the lysosomes for degradation. Ubiquitinated by NOSIP; appears to be either multi-monoubiquitinated or polyubiquitinated. Ubiquitination mediates proliferation and survival of EPO-dependent cells. As to expression, erythroid cells and erythroid progenitor cells. Isoform EPOR-F is the most abundant form in EPO-dependent erythroleukemia cells and in late-stage erythroid progenitors. In terms of tissue distribution, isoform EPOR-S and isoform EPOR-T are the predominant forms in bone marrow. As to expression, isoform EPOR-S and isoform EPOR-T are the predominant forms in bone marrow. Isoform EPOR-T is the most abundant from in early-stage erythroid progenitor cells.

It localises to the cell membrane. The protein localises to the secreted. In terms of biological role, receptor for erythropoietin, which mediates erythropoietin-induced erythroblast proliferation and differentiation. Upon EPO stimulation, EPOR dimerizes triggering the JAK2/STAT5 signaling cascade. In some cell types, can also activate STAT1 and STAT3. May also activate the LYN tyrosine kinase. Acts as a dominant-negative receptor of EPOR-mediated signaling. This chain is Erythropoietin receptor, found in Homo sapiens (Human).